A 433-amino-acid polypeptide reads, in one-letter code: Protein translocase subunit SecD (433 aa).

The next 6 membrane-spanning stretches (helical) occupy residues 7–27 (LAFLAMVVVVLGLTISTGPKI), 257–277 (LIAGVIAVVLIFAFMIAAYRM), 278–298 (AGLIADIALVAYGYLTLLTFA), 300–320 (LHVVLTLSGLAALILGVGIAV), 354–374 (TIVDSNATTFIAGLIMYIFGG), and 380–400 (GFAVALMVGIIVSLLTAVLFA).

This sequence belongs to the SecD/SecF family. SecD subfamily. As to quaternary structure, forms a complex with SecF. Part of the essential Sec protein translocation apparatus which comprises SecA, SecYEG and auxiliary proteins SecDF. Other proteins may also be involved.

The protein localises to the cell membrane. In terms of biological role, part of the Sec protein translocase complex. Interacts with the SecYEG preprotein conducting channel. SecDF uses the proton motive force (PMF) to complete protein translocation after the ATP-dependent function of SecA. The sequence is that of Protein translocase subunit SecD from Alicyclobacillus acidocaldarius subsp. acidocaldarius (strain ATCC 27009 / DSM 446 / BCRC 14685 / JCM 5260 / KCTC 1825 / NBRC 15652 / NCIMB 11725 / NRRL B-14509 / 104-IA) (Bacillus acidocaldarius).